Consider the following 306-residue polypeptide: tRNA pseudouridine synthase B (306 aa).

D48 functions as the Nucleophile in the catalytic mechanism.

Belongs to the pseudouridine synthase TruB family. Type 1 subfamily.

It catalyses the reaction uridine(55) in tRNA = pseudouridine(55) in tRNA. Functionally, responsible for synthesis of pseudouridine from uracil-55 in the psi GC loop of transfer RNAs. The polypeptide is tRNA pseudouridine synthase B (Haemophilus influenzae (strain PittEE)).